Reading from the N-terminus, the 301-residue chain is Acetyl-coenzyme A carboxylase carboxyl transferase subunit beta (301 aa).

The region spanning 25–294 (LWIKDPSTGE…NSDAPAPQKP (270 aa)) is the CoA carboxyltransferase N-terminal domain.

Belongs to the AccD/PCCB family. As to quaternary structure, acetyl-CoA carboxylase is a heterohexamer composed of biotin carboxyl carrier protein (AccB), biotin carboxylase (AccC) and two subunits each of ACCase subunit alpha (AccA) and ACCase subunit beta (AccD).

The protein localises to the cytoplasm. It catalyses the reaction N(6)-carboxybiotinyl-L-lysyl-[protein] + acetyl-CoA = N(6)-biotinyl-L-lysyl-[protein] + malonyl-CoA. It functions in the pathway lipid metabolism; malonyl-CoA biosynthesis; malonyl-CoA from acetyl-CoA: step 1/1. Functionally, component of the acetyl coenzyme A carboxylase (ACC) complex. Biotin carboxylase (BC) catalyzes the carboxylation of biotin on its carrier protein (BCCP) and then the CO(2) group is transferred by the transcarboxylase to acetyl-CoA to form malonyl-CoA. In Brucella canis (strain ATCC 23365 / NCTC 10854 / RM-666), this protein is Acetyl-coenzyme A carboxylase carboxyl transferase subunit beta.